Consider the following 481-residue polypeptide: Glutamyl-tRNA(Gln) amidotransferase subunit A (481 aa).

Residues Lys78 and Ser153 each act as charge relay system in the active site. Ser177 functions as the Acyl-ester intermediate in the catalytic mechanism.

This sequence belongs to the amidase family. GatA subfamily. In terms of assembly, heterotrimer of A, B and C subunits.

It catalyses the reaction L-glutamyl-tRNA(Gln) + L-glutamine + ATP + H2O = L-glutaminyl-tRNA(Gln) + L-glutamate + ADP + phosphate + H(+). Its function is as follows. Allows the formation of correctly charged Gln-tRNA(Gln) through the transamidation of misacylated Glu-tRNA(Gln) in organisms which lack glutaminyl-tRNA synthetase. The reaction takes place in the presence of glutamine and ATP through an activated gamma-phospho-Glu-tRNA(Gln). The sequence is that of Glutamyl-tRNA(Gln) amidotransferase subunit A from Borreliella afzelii (strain PKo) (Borrelia afzelii).